Here is a 90-residue protein sequence, read N- to C-terminus: UPF0367 protein SYNPCC7002_A0153 (90 aa).

This sequence belongs to the UPF0367 family.

The chain is UPF0367 protein SYNPCC7002_A0153 from Picosynechococcus sp. (strain ATCC 27264 / PCC 7002 / PR-6) (Agmenellum quadruplicatum).